The primary structure comprises 334 residues: Serpentine receptor class alpha-11 (334 aa).

The Extracellular segment spans residues 1-23 (MTTNNPVCASDAHMEMYSSKLYT). The chain crosses the membrane as a helical span at residues 24–44 (SALFLNLIIATTSMILTGFAI). At 45-57 (QKLFMESIINIST) the chain is on the cytoplasmic side. Residues 58-80 (RMFLFCGLMCCSLHQTAYIVLRI) traverse the membrane as a helical segment. Residues 81–105 (QVIYQVFFKLSEPCNLYYPAIDCKY) are Extracellular-facing. The chain crosses the membrane as a helical span at residues 106-126 (VTFSLVAGNTGMIFIQSAMTI). Topologically, residues 127-145 (DRIFATIFPKLWPKLKYWP) are cytoplasmic. Residues 146 to 166 (GVVLSILMIACNYANVQIIFW) form a helical membrane-spanning segment. Over 167-191 (GDPLTEYVPTCGQFPSKSVNRFQTF) the chain is Extracellular. The helical transmembrane segment at 192-212 (LAIALYMSIAHMVINVIILYI) threads the bilayer. The Cytoplasmic segment spans residues 213–239 (NVLQDRQQSKSFNVNQRYQSREALKSS). Residues 240-260 (QAIFFLSMSQFFACLIYSVFT) traverse the membrane as a helical segment. Topologically, residues 261 to 277 (KVFLEFQLNLSPLQSGL) are extracellular. The chain crosses the membrane as a helical span at residues 278–298 (VLALSYTTPYACIAIPSLIIF). The Cytoplasmic portion of the chain corresponds to 299–334 (TFRFIKNQRLRNINELRSQTETGDECMRKIAKIWEK).

This sequence belongs to the nematode receptor-like protein sra family. Expressed in interneurons AIY and AVB in L1 larvae. In adults, strong expression is seen in AIY and AIA but only weak expression in AVB.

It localises to the membrane. A G protein-coupled receptor required for olfactory imprinting a requisite in ordorant response such as benzaldehyde and isoamylalcohol. This Caenorhabditis elegans protein is Serpentine receptor class alpha-11 (sra-11).